The primary structure comprises 272 residues: Zinc transporter ZupT (272 aa).

Helical transmembrane passes span isoleucine 11–valine 31, leucine 40–isoleucine 60, leucine 76–aspartate 96, leucine 126–alanine 146, alanine 158–phenylalanine 178, alanine 189–phenylalanine 209, valine 211–leucine 231, and valine 250–alanine 270. The Fe(2+) site is built by asparagine 136 and glutamate 139. The Zn(2+) site is built by glutamate 139 and histidine 164. Fe(2+) contacts are provided by asparagine 165, glutamate 168, and glutamate 197. Position 168 (glutamate 168) interacts with Zn(2+).

Belongs to the ZIP transporter (TC 2.A.5) family. ZupT subfamily.

It localises to the cell inner membrane. It carries out the reaction Zn(2+)(in) = Zn(2+)(out). In terms of biological role, mediates zinc uptake. May also transport other divalent cations. The sequence is that of Zinc transporter ZupT from Xanthomonas axonopodis pv. citri (strain 306).